The sequence spans 179 residues: Shikimate kinase (179 aa).

Residue 15–20 (GAGKTS) coordinates ATP. Threonine 19 lines the Mg(2+) pocket. Substrate-binding residues include aspartate 37, arginine 61, and glycine 83. Arginine 123 is a binding site for ATP. Position 142 (arginine 142) interacts with substrate.

It belongs to the shikimate kinase family. Monomer. It depends on Mg(2+) as a cofactor.

It localises to the cytoplasm. The enzyme catalyses shikimate + ATP = 3-phosphoshikimate + ADP + H(+). Its pathway is metabolic intermediate biosynthesis; chorismate biosynthesis; chorismate from D-erythrose 4-phosphate and phosphoenolpyruvate: step 5/7. Its function is as follows. Catalyzes the specific phosphorylation of the 3-hydroxyl group of shikimic acid using ATP as a cosubstrate. This is Shikimate kinase from Coxiella burnetii (strain CbuG_Q212) (Coxiella burnetii (strain Q212)).